The chain runs to 294 residues: Shikimate dehydrogenase (NADP(+)) (294 aa).

Residues 23–25 and threonine 76 contribute to the shikimate site; that span reads SRS. Lysine 80 serves as the catalytic Proton acceptor. Shikimate contacts are provided by asparagine 101 and aspartate 116. Residues 141 to 145 and methionine 233 contribute to the NADP(+) site; that span reads GAGGA. Shikimate is bound at residue tyrosine 235. Glycine 256 contacts NADP(+).

This sequence belongs to the shikimate dehydrogenase family. Homodimer.

The catalysed reaction is shikimate + NADP(+) = 3-dehydroshikimate + NADPH + H(+). The protein operates within metabolic intermediate biosynthesis; chorismate biosynthesis; chorismate from D-erythrose 4-phosphate and phosphoenolpyruvate: step 4/7. Involved in the biosynthesis of the chorismate, which leads to the biosynthesis of aromatic amino acids. Catalyzes the reversible NADPH linked reduction of 3-dehydroshikimate (DHSA) to yield shikimate (SA). This is Shikimate dehydrogenase (NADP(+)) from Methylibium petroleiphilum (strain ATCC BAA-1232 / LMG 22953 / PM1).